A 396-amino-acid chain; its full sequence is MIIKPKVRGFICTNAHPKGCAANVQAQIEYTQAQGKIENGPKNVLVVGASTGYGLASRIVAAFGCGAKTLGLFFEKPGTERKTGTAGFYNVAAFQQAAEKAGLWSKNMNGDAFSHEAKSKAIDVIKAEMGKIDLVVYSLASPRRQDPDSGEVYSSVLKPVGQAYTSKNLNTDTLKITETTLDAASDEEIAQTIKVMGGEDWELWMNALAEADVLAEGCKTVAYTYLGEKITWPIYGKATIGKAKEDLDRAATAIASAHSEKNISANVAVLKAVVTQASSAIPIMPLYLSALFKVMKANGTQEGCIEQLNRLFTECLYSDSPRLDDANRFRVDEKELSPEVQAGVEALWGEITEENLLEISDFKGYQQEFLGLFGFGVDGVDYEEDVDPNVALALVE.

NAD(+) is bound by residues 48 to 53 (GASTGY), 74 to 75 (FE), 111 to 112 (DA), and 139 to 140 (LA). Tyr-225 is a substrate binding site. The active-site Proton donor is Tyr-235. NAD(+) contacts are provided by residues Lys-244 and 273 to 275 (VVT).

Belongs to the TER reductase family. As to quaternary structure, monomer.

The catalysed reaction is a 2,3-saturated acyl-[ACP] + NAD(+) = a (2E)-enoyl-[ACP] + NADH + H(+). It participates in lipid metabolism; fatty acid biosynthesis. Functionally, involved in the final reduction of the elongation cycle of fatty acid synthesis (FAS II). Catalyzes the reduction of a carbon-carbon double bond in an enoyl moiety that is covalently linked to an acyl carrier protein (ACP). The sequence is that of Enoyl-[acyl-carrier-protein] reductase [NADH] from Teredinibacter turnerae (strain ATCC 39867 / T7901).